A 107-amino-acid chain; its full sequence is EPIDERMAL PATTERNING FACTOR-like protein 3 (107 aa).

The signal sequence occupies residues 1 to 24; the sequence is MEYMFLLMSKFFFVFPIIIYIGPA. Intrachain disulfides connect cysteine 64–cysteine 102, cysteine 68–cysteine 74, and cysteine 71–cysteine 104.

It belongs to the plant cysteine rich small secretory peptide family. Epidermal patterning factor subfamily.

The protein localises to the secreted. In terms of biological role, controls stomatal patterning. This is EPIDERMAL PATTERNING FACTOR-like protein 3 from Arabidopsis thaliana (Mouse-ear cress).